Reading from the N-terminus, the 351-residue chain is MLYSLVKKYLFSLDAEIAHEKVCQILRTLSSSPFLCRLIHSQWGYKNPKLENEILGLNFPNPLGLAAGFDKNASMLRALIAFGFGYLEAGTLTNIAQSGNEKPRLFRHIEEESLQNAMGFNNYGAILGVRAFNRFAPYKTPIGINLGKNKHIEQAHALEDYQAVLNQCLNIGDYYTFNLSSPNTPNLRDLQNKVFVNELFCMAKEMTHKPLFLKIAPDLEIDSMLEVVNSAIEAGANGIIATNTTIDKSLVFAPKEMGGLSGKCLTKKSREIFKELAKAFFNKSVLVSVGGISDAKEAYERIKMGASLLQIYSAFIYKGPNLCQNILKDLVKLLQKDGFLSVKEAIGADLR.

FMN-binding positions include 67-71 and threonine 91; that span reads AGFDK. Lysine 71 is a binding site for substrate. 116–120 contacts substrate; that stretch reads NAMGF. 2 residues coordinate FMN: asparagine 145 and asparagine 178. Asparagine 178 contributes to the substrate binding site. Catalysis depends on serine 181, which acts as the Nucleophile. Asparagine 183 serves as a coordination point for substrate. Positions 214 and 242 each coordinate FMN. 243–244 is a substrate binding site; sequence NT. Residues glycine 262, glycine 291, and 312–313 each bind FMN; that span reads YS.

Belongs to the dihydroorotate dehydrogenase family. Type 2 subfamily. As to quaternary structure, monomer. It depends on FMN as a cofactor.

Its subcellular location is the cell membrane. It catalyses the reaction (S)-dihydroorotate + a quinone = orotate + a quinol. Its pathway is pyrimidine metabolism; UMP biosynthesis via de novo pathway; orotate from (S)-dihydroorotate (quinone route): step 1/1. Functionally, catalyzes the conversion of dihydroorotate to orotate with quinone as electron acceptor. The polypeptide is Dihydroorotate dehydrogenase (quinone) (pyrD) (Helicobacter pylori (strain J99 / ATCC 700824) (Campylobacter pylori J99)).